The primary structure comprises 173 residues: Peptide methionine sulfoxide reductase MsrA (173 aa).

Cys-10 is an active-site residue.

Belongs to the MsrA Met sulfoxide reductase family.

The catalysed reaction is L-methionyl-[protein] + [thioredoxin]-disulfide + H2O = L-methionyl-(S)-S-oxide-[protein] + [thioredoxin]-dithiol. The enzyme catalyses [thioredoxin]-disulfide + L-methionine + H2O = L-methionine (S)-S-oxide + [thioredoxin]-dithiol. Has an important function as a repair enzyme for proteins that have been inactivated by oxidation. Catalyzes the reversible oxidation-reduction of methionine sulfoxide in proteins to methionine. The sequence is that of Peptide methionine sulfoxide reductase MsrA from Psychrobacter cryohalolentis (strain ATCC BAA-1226 / DSM 17306 / VKM B-2378 / K5).